Reading from the N-terminus, the 338-residue chain is tRNA N6-adenosine threonylcarbamoyltransferase (338 aa).

Residues H111 and H115 each contribute to the Fe cation site. Substrate-binding positions include 134-138, D167, G180, and N272; that span reads LVSGG. D300 lines the Fe cation pocket.

It belongs to the KAE1 / TsaD family. Fe(2+) is required as a cofactor.

The protein resides in the cytoplasm. The enzyme catalyses L-threonylcarbamoyladenylate + adenosine(37) in tRNA = N(6)-L-threonylcarbamoyladenosine(37) in tRNA + AMP + H(+). Required for the formation of a threonylcarbamoyl group on adenosine at position 37 (t(6)A37) in tRNAs that read codons beginning with adenine. Is involved in the transfer of the threonylcarbamoyl moiety of threonylcarbamoyl-AMP (TC-AMP) to the N6 group of A37, together with TsaE and TsaB. TsaD likely plays a direct catalytic role in this reaction. The protein is tRNA N6-adenosine threonylcarbamoyltransferase of Shewanella denitrificans (strain OS217 / ATCC BAA-1090 / DSM 15013).